A 468-amino-acid polypeptide reads, in one-letter code: Cysteine--tRNA ligase (468 aa).

C33 is a binding site for Zn(2+). Residues 35–45 (ATVQGLPHIGH) carry the 'HIGH' region motif. Residues C211, H236, and E240 each coordinate Zn(2+). A 'KMSKS' region motif is present at residues 267-271 (KMSKS). K270 contributes to the ATP binding site.

Belongs to the class-I aminoacyl-tRNA synthetase family. Monomer. Zn(2+) is required as a cofactor.

The protein localises to the cytoplasm. The enzyme catalyses tRNA(Cys) + L-cysteine + ATP = L-cysteinyl-tRNA(Cys) + AMP + diphosphate. This chain is Cysteine--tRNA ligase, found in Mycolicibacterium paratuberculosis (strain ATCC BAA-968 / K-10) (Mycobacterium paratuberculosis).